The following is a 117-amino-acid chain: Holo-[acyl-carrier-protein] synthase (117 aa).

2 residues coordinate Mg(2+): Asp8 and Glu58.

This sequence belongs to the P-Pant transferase superfamily. AcpS family. Mg(2+) is required as a cofactor.

The protein localises to the cytoplasm. The catalysed reaction is apo-[ACP] + CoA = holo-[ACP] + adenosine 3',5'-bisphosphate + H(+). Its function is as follows. Transfers the 4'-phosphopantetheine moiety from coenzyme A to a Ser of acyl-carrier-protein. This chain is Holo-[acyl-carrier-protein] synthase, found in Latilactobacillus sakei subsp. sakei (strain 23K) (Lactobacillus sakei subsp. sakei).